The following is a 63-amino-acid chain: Cytotoxin homolog S3C2 (63 aa).

Disulfide bonds link Cys3/Cys22, Cys15/Cys40, Cys44/Cys55, and Cys56/Cys61.

It belongs to the three-finger toxin family. Short-chain subfamily. Orphan group XVI sub-subfamily. Expressed by the venom gland.

The protein resides in the secreted. In Aspidelaps scutatus (Shield-nose snake), this protein is Cytotoxin homolog S3C2.